The sequence spans 333 residues: MIAVLFLAILCLEVDSTAPTPDPSLDVEWNEWRTKHGKTYNMNEERLKRAVWEKNFKMIELHNWEYLEGRHDFTMAMNAFGDLTNIEFVKMMTGFQRQKIKKTHIFQDHQFLYVPKRVDWRQLGYVTPVKNQGHCASSWAFSATGSLEGQMFRKTERLIPLSEQNLLDCMGSNVTHGCSGGFMQYAFQYVKDNGGLATEESYPYRGQGRECRYHAENSAANVRDFVQIPGSEEALMKAVAKVGPISVAVDASHGSFQFYGSGIYYEPQCKRVHLNHAVLVVGYGFEGEESDGNSFWLVKNSWGEEWGMKGYMKLAKDWSNHCGIATYSTYPIV.

Residues 1–17 (MIAVLFLAILCLEVDST) form the signal peptide. 3 disulfides stabilise this stretch: Cys135–Cys178, Cys169–Cys211, and Cys269–Cys322. Residue Asn173 is glycosylated (N-linked (GlcNAc...) asparagine). Active-site residues include His276 and Asn300.

The protein belongs to the peptidase C1 family. In terms of tissue distribution, sertoli cells.

It is found in the secreted. The protein is Testin-2 (Testin) of Rattus norvegicus (Rat).